The chain runs to 880 residues: Endoglucanase E-4 (880 aa).

An N-terminal signal peptide occupies residues 1-46; it reads MSVTEPPPRRRGRHSRARRFLTSLGATAALTAGMLGVPLATGTAHA. Aspartate 104 acts as the Nucleophile in catalysis. Catalysis depends on residues histidine 422, histidine 427, aspartate 461, and glutamate 470. The CBM3 domain maps to 504–652; that stretch reads PDGPEIFVEA…GVPVWGTAPE (149 aa). Positions 647-688 are disordered; sequence WGTAPEEGEEPGGGEGPGGGEEPGEDVTPPSAPGSPAVRDVT. One can recognise a Fibronectin type-III domain in the interval 678-770; it reads APGSPAVRDV…TVSFTTLAEN (93 aa). One can recognise a CBM2 domain in the interval 771–880; the sequence is GGGPDASCTV…TLNGEPCALA (110 aa).

This sequence belongs to the glycosyl hydrolase 9 (cellulase E) family.

It carries out the reaction Endohydrolysis of (1-&gt;4)-beta-D-glucosidic linkages in cellulose, lichenin and cereal beta-D-glucans.. Its pathway is glycan metabolism; cellulose degradation. The sequence is that of Endoglucanase E-4 (celD) from Thermobifida fusca (Thermomonospora fusca).